A 488-amino-acid chain; its full sequence is Bifunctional protein HldE (488 aa).

The interval 1–327 (MDDTLAKLPR…GLAHGEHADP (327 aa)) is ribokinase. Residue 201-204 (NRRE) coordinates ATP. The active site involves aspartate 272. The tract at residues 354–488 (FTNGCFDLLH…GRMNAPAVGG (135 aa)) is cytidylyltransferase.

It in the N-terminal section; belongs to the carbohydrate kinase PfkB family. In the C-terminal section; belongs to the cytidylyltransferase family. Homodimer.

It carries out the reaction D-glycero-beta-D-manno-heptose 7-phosphate + ATP = D-glycero-beta-D-manno-heptose 1,7-bisphosphate + ADP + H(+). It catalyses the reaction D-glycero-beta-D-manno-heptose 1-phosphate + ATP + H(+) = ADP-D-glycero-beta-D-manno-heptose + diphosphate. It participates in nucleotide-sugar biosynthesis; ADP-L-glycero-beta-D-manno-heptose biosynthesis; ADP-L-glycero-beta-D-manno-heptose from D-glycero-beta-D-manno-heptose 7-phosphate: step 1/4. Its pathway is nucleotide-sugar biosynthesis; ADP-L-glycero-beta-D-manno-heptose biosynthesis; ADP-L-glycero-beta-D-manno-heptose from D-glycero-beta-D-manno-heptose 7-phosphate: step 3/4. Catalyzes the phosphorylation of D-glycero-D-manno-heptose 7-phosphate at the C-1 position to selectively form D-glycero-beta-D-manno-heptose-1,7-bisphosphate. In terms of biological role, catalyzes the ADP transfer from ATP to D-glycero-beta-D-manno-heptose 1-phosphate, yielding ADP-D-glycero-beta-D-manno-heptose. The chain is Bifunctional protein HldE from Caulobacter sp. (strain K31).